The primary structure comprises 264 residues: S-adenosylmethionine decarboxylase proenzyme (264 aa).

Catalysis depends on serine 112, which acts as the Schiff-base intermediate with substrate; via pyruvic acid. A Pyruvic acid (Ser); by autocatalysis modification is found at serine 112. Histidine 117 serves as the catalytic Proton acceptor; for processing activity. The Proton donor; for catalytic activity role is filled by cysteine 140.

It belongs to the prokaryotic AdoMetDC family. Type 2 subfamily. As to quaternary structure, heterooctamer of four alpha and four beta chains arranged as a tetramer of alpha/beta heterodimers. Pyruvate serves as cofactor. Is synthesized initially as an inactive proenzyme. Formation of the active enzyme involves a self-maturation process in which the active site pyruvoyl group is generated from an internal serine residue via an autocatalytic post-translational modification. Two non-identical subunits are generated from the proenzyme in this reaction, and the pyruvate is formed at the N-terminus of the alpha chain, which is derived from the carboxyl end of the proenzyme. The post-translation cleavage follows an unusual pathway, termed non-hydrolytic serinolysis, in which the side chain hydroxyl group of the serine supplies its oxygen atom to form the C-terminus of the beta chain, while the remainder of the serine residue undergoes an oxidative deamination to produce ammonia and the pyruvoyl group blocking the N-terminus of the alpha chain.

It catalyses the reaction S-adenosyl-L-methionine + H(+) = S-adenosyl 3-(methylsulfanyl)propylamine + CO2. The protein operates within amine and polyamine biosynthesis; S-adenosylmethioninamine biosynthesis; S-adenosylmethioninamine from S-adenosyl-L-methionine: step 1/1. Catalyzes the decarboxylation of S-adenosylmethionine to S-adenosylmethioninamine (dcAdoMet), the propylamine donor required for the synthesis of the polyamines spermine and spermidine from the diamine putrescine. The sequence is that of S-adenosylmethionine decarboxylase proenzyme from Enterobacter sp. (strain 638).